We begin with the raw amino-acid sequence, 2017 residues long: Rootletin (2017 aa).

2 coiled-coil regions span residues 70-262 and 318-444; these read ATEM…KVTN and ERDL…LETE. Residues 464 to 483 are compositionally biased toward polar residues; that stretch reads SESGVQLSGSERTADASNGS. Positions 464–518 are disordered; the sequence is SESGVQLSGSERTADASNGSLRGLSGQRTPSPPRRSSPGRGRSPRRGPSPACSDS. The span at 499-513 shows a compositional bias: low complexity; the sequence is SSPGRGRSPRRGPSP. Coiled-coil stretches lie at residues 546-1058 and 1091-1438; these read QDLL…LAES and EMER…GLRS. Disordered stretches follow at residues 1184-1226 and 1443-1575; these read LRES…RSAV and GLGL…GRLS. Phosphoserine is present on residues S1460, S1470, S1476, S1483, S1486, S1490, and S1496. The stretch at 1505–1704 forms a coiled coil; the sequence is EAVRGALREF…DSEVKAGTLQ (200 aa). Residues 1510-1529 show a composition bias toward basic and acidic residues; the sequence is ALREFLQELRSAQRERDELR. Phosphoserine is present on residues S1575 and S1660. A disordered region spans residues 1962–2017; sequence RSAQAQTERTLEARERAHRQRVRGLEEQVSTLKGQLQQELRRSSAPFSPPSGPPEK. Residues 1989-1999 show a composition bias toward polar residues; it reads QVSTLKGQLQQ. A compositionally biased stretch (pro residues) spans 2008–2017; it reads FSPPSGPPEK.

The protein belongs to the rootletin family. As to quaternary structure, homomer. Interacts with KLC3, NEK2 and the N-terminus of CEP250. Interacts with CEP44. Interacts with CCDC102B (via N-terminus). Post-translationally, phosphorylated by NEK2 which may regulate its association with centrosomes.

The protein localises to the cytoplasm. It is found in the cytoskeleton. The protein resides in the microtubule organizing center. Its subcellular location is the centrosome. It localises to the centriole. The protein localises to the cilium basal body. Its function is as follows. Major structural component of the ciliary rootlet, a cytoskeletal-like structure in ciliated cells which originates from the basal body at the proximal end of a cilium and extends proximally toward the cell nucleus. Furthermore, is required for the correct positioning of the cilium basal body relative to the cell nucleus, to allow for ciliogenesis. Contributes to centrosome cohesion before mitosis. The sequence is that of Rootletin from Homo sapiens (Human).